A 225-amino-acid chain; its full sequence is NAD(P)H-quinone oxidoreductase subunit K, chloroplastic (225 aa).

4 residues coordinate [4Fe-4S] cluster: C43, C44, C108, and C139.

This sequence belongs to the complex I 20 kDa subunit family. As to quaternary structure, NDH is composed of at least 16 different subunits, 5 of which are encoded in the nucleus. [4Fe-4S] cluster serves as cofactor.

The protein resides in the plastid. Its subcellular location is the chloroplast thylakoid membrane. It carries out the reaction a plastoquinone + NADH + (n+1) H(+)(in) = a plastoquinol + NAD(+) + n H(+)(out). The catalysed reaction is a plastoquinone + NADPH + (n+1) H(+)(in) = a plastoquinol + NADP(+) + n H(+)(out). NDH shuttles electrons from NAD(P)H:plastoquinone, via FMN and iron-sulfur (Fe-S) centers, to quinones in the photosynthetic chain and possibly in a chloroplast respiratory chain. The immediate electron acceptor for the enzyme in this species is believed to be plastoquinone. Couples the redox reaction to proton translocation, and thus conserves the redox energy in a proton gradient. This is NAD(P)H-quinone oxidoreductase subunit K, chloroplastic from Helianthus annuus (Common sunflower).